The sequence spans 45 residues: Large ribosomal subunit protein bL36 (45 aa).

The disordered stretch occupies residues 26–45 (VINKKDPNRKQRQKGPARKK). The span at 35–45 (KQRQKGPARKK) shows a compositional bias: basic residues.

Belongs to the bacterial ribosomal protein bL36 family.

The protein is Large ribosomal subunit protein bL36 of Protochlamydia amoebophila (strain UWE25).